The primary structure comprises 156 residues: Small ribosomal subunit protein uS7 (156 aa).

Belongs to the universal ribosomal protein uS7 family. Part of the 30S ribosomal subunit. Contacts proteins S9 and S11.

Functionally, one of the primary rRNA binding proteins, it binds directly to 16S rRNA where it nucleates assembly of the head domain of the 30S subunit. Is located at the subunit interface close to the decoding center, probably blocks exit of the E-site tRNA. The protein is Small ribosomal subunit protein uS7 of Corynebacterium jeikeium (strain K411).